The following is a 968-amino-acid chain: Chaperone protein ClpB3, chloroplastic (968 aa).

The N-terminal 67 residues, 1-67, are a transit peptide targeting the chloroplast; sequence MATATTTATA…RLDHRPFVVR (67 aa). In terms of domain architecture, Clp R spans 78 to 222; that stretch reads TQQEFTEMAW…KSAIESIRGK (145 aa). 2 repeat regions span residues 82 to 147 and 159 to 222; these read FTEM…IQRQ and LGRD…IRGK. An i region spans residues 237–485; sequence LEKYGKDLTA…KLKMEITSKP (249 aa). 282-289 contacts ATP; it reads GEPGVGKT. A coiled-coil region spans residues 488–606; the sequence is LDELDRSVIK…NEYLSSGKSM (119 aa). The interval 611–802 is II; that stretch reads VLGSDIAEIV…VIIMTSNVGS (192 aa). ATP is bound at residue 685 to 692; that stretch reads GPTGVGKT.

This sequence belongs to the ClpA/ClpB family.

It is found in the plastid. The protein localises to the chloroplast. In terms of biological role, molecular chaperone essential for chloroplast development and seedling viability. Mediates internal thylakoid membrane formation and confers thermotolerance to chloroplasts during heat stress. In Arabidopsis thaliana (Mouse-ear cress), this protein is Chaperone protein ClpB3, chloroplastic (CLPB3).